A 711-amino-acid polypeptide reads, in one-letter code: Serine/threonine-protein kinase ATG1b (711 aa).

Residues 20 to 277 (YAVGRQIGSG…FEEFFHHPFL (258 aa)) form the Protein kinase domain. Residues 26-34 (IGSGSFSVV) and Lys49 each bind ATP. Asp142 acts as the Proton acceptor in catalysis. Disordered stretches follow at residues 318 to 342 (LPFF…TSPM) and 383 to 419 (FEGH…SMDQ). Residues 383 to 393 (FEGHRLSDRSQ) are compositionally biased toward basic and acidic residues. Residues 394-410 (FKPSSLPDSRSFSTQGR) show a composition bias toward polar residues. An AIM (Atg8-family-interacting motif) motif is present at residues 421–424 (YVLI).

It belongs to the protein kinase superfamily. Ser/Thr protein kinase family.

It is found in the cytoplasmic vesicle. It localises to the autophagosome. Serine/threonine protein kinase involved in autophagy. The ATG1-ATG13 protein kinase complex regulates downstream events required for autophagosome enclosure and/or vacuolar delivery. The sequence is that of Serine/threonine-protein kinase ATG1b from Arabidopsis thaliana (Mouse-ear cress).